Consider the following 262-residue polypeptide: Ribosomal RNA small subunit methyltransferase A (262 aa).

S-adenosyl-L-methionine is bound by residues isoleucine 18, glycine 43, glutamate 65, aspartate 91, and asparagine 110.

This sequence belongs to the class I-like SAM-binding methyltransferase superfamily. rRNA adenine N(6)-methyltransferase family. RsmA subfamily.

The protein resides in the cytoplasm. The enzyme catalyses adenosine(1518)/adenosine(1519) in 16S rRNA + 4 S-adenosyl-L-methionine = N(6)-dimethyladenosine(1518)/N(6)-dimethyladenosine(1519) in 16S rRNA + 4 S-adenosyl-L-homocysteine + 4 H(+). Functionally, specifically dimethylates two adjacent adenosines (A1518 and A1519) in the loop of a conserved hairpin near the 3'-end of 16S rRNA in the 30S particle. May play a critical role in biogenesis of 30S subunits. The chain is Ribosomal RNA small subunit methyltransferase A from Ehrlichia canis (strain Jake).